Reading from the N-terminus, the 956-residue chain is Netrin receptor UNC5D (956 aa).

The signal sequence occupies residues 1–30; it reads MGTGAADRSRGARWWLPWLGLCFWAAGAEA. Over 31–382 the chain is Extracellular; the sequence is ARGADSGEVL…SRRGIENASD (352 aa). The Ig-like domain occupies 52-149; it reads PHFIEEPEDA…LGTSKSRKAS (98 aa). Disulfide bonds link C73/C134, C85/C132, C178/C229, C262/C299, C266/C303, C277/C289, C318/C352, C322/C357, and C330/C342. The interval 89-91 is important for interaction with FLRT2; the sequence is WVH. Residues N115 and N226 are each glycosylated (N-linked (GlcNAc...) asparagine). The region spanning 164–242 is the Ig-like C2-type domain; it reads QGREVPIEGM…NIVAKRRSLS (79 aa). 2 consecutive TSP type-1 domains span residues 250-304 and 306-358; these read NGGW…ALCP and DGSW…GLCI. Residues 383 to 403 traverse the membrane as a helical segment; sequence IALYSGLGAAVVAVAVLVIGV. Over 404–956 the chain is Cytoplasmic; that stretch reads TLYRRSHSDY…DFNYSRQNGL (553 aa). Residues 545–685 form the ZU5 domain; it reads LRTTGVFGHL…FGTYALTGEP (141 aa). The Death domain maps to 862–939; the sequence is QRICATFDTP…RTHTKLSNIT (78 aa).

This sequence belongs to the unc-5 family. In terms of assembly, interacts (via extracellular domain) with FLRT2 and FLRT3 (via extracellular domain); the interaction is direct. Has higher affinity for FLRT2. Identified in a complex with FLRT3 and ADGRL3; does not interact with ADGRL3 by itself. In terms of processing, proteolytically cleaved by caspases during apoptosis. The cleavage does not take place when the receptor is associated with netrin ligand. Its cleavage by caspases is required to induce apoptosis.

The protein resides in the cell membrane. In terms of biological role, receptor for the netrin NTN4 that promotes neuronal cell survival. Plays a role in cell-cell adhesion and cell guidance. Receptor for netrin involved in cell migration. Plays a role in axon guidance by mediating axon repulsion of neuronal growth cones in the developing nervous system upon ligand binding. May play a role in apoptosis in response to DNA damage. It also acts as a dependence receptor required for apoptosis induction when not associated with netrin ligand. Mediates cell-cell adhesion via its interaction with FLRT3 on an adjacent cell. In Rattus norvegicus (Rat), this protein is Netrin receptor UNC5D.